The primary structure comprises 193 residues: Peptidyl-tRNA hydrolase (193 aa).

Residue H17 coordinates tRNA. Residue H22 is the Proton acceptor of the active site. TRNA contacts are provided by F68, N70, and N116.

The protein belongs to the PTH family. In terms of assembly, monomer.

It is found in the cytoplasm. The catalysed reaction is an N-acyl-L-alpha-aminoacyl-tRNA + H2O = an N-acyl-L-amino acid + a tRNA + H(+). In terms of biological role, hydrolyzes ribosome-free peptidyl-tRNAs (with 1 or more amino acids incorporated), which drop off the ribosome during protein synthesis, or as a result of ribosome stalling. Its function is as follows. Catalyzes the release of premature peptidyl moieties from peptidyl-tRNA molecules trapped in stalled 50S ribosomal subunits, and thus maintains levels of free tRNAs and 50S ribosomes. This Xanthomonas axonopodis pv. citri (strain 306) protein is Peptidyl-tRNA hydrolase.